A 193-amino-acid polypeptide reads, in one-letter code: Putative manganese efflux pump MntP (193 aa).

6 helical membrane-spanning segments follow: residues 6–26 (LLGL…AVGI), 41–61 (YHFG…GTGI), 65–85 (TQSY…ANMI), 107–127 (LIIL…SLSM), 132–152 (IWYP…FGML), and 169–189 (VLGG…NGVF).

Belongs to the MntP (TC 9.B.29) family.

The protein resides in the cell inner membrane. Functionally, probably functions as a manganese efflux pump. The chain is Putative manganese efflux pump MntP from Desulfotalea psychrophila (strain LSv54 / DSM 12343).